A 204-amino-acid polypeptide reads, in one-letter code: Methyl-CpG-binding domain-containing protein 1 (204 aa).

Residues 1–46 (MLPFPAMNLKKSRSENSSVASSGSKIEEQTEKSAEPTTIKVQKKAG) form a disordered region. Residues 15–24 (ENSSVASSGS) show a composition bias toward polar residues. The segment covering 25-34 (KIEEQTEKSA) has biased composition (basic and acidic residues). The segment at 49 to 104 (GRSIDVFAVQCEKCMKWRKIDTQDEYEDIRSRVQEDPFFCKTKEGVSCEDVGDLNY) adopts a CW-type zinc-finger fold. The MBD-associated domain (MAD) motif lies at 58-96 (QCEKCMKWRKIDTQDEYEDIRSRVQEDPFFCKTKEGVSC). Zn(2+) contacts are provided by cysteine 59, cysteine 62, cysteine 88, and cysteine 96. An MBD domain is found at 110 to 180 (WVIDKPGLPR…GDFNFTVPKV (71 aa)).

In terms of tissue distribution, mostly expressed in flowers and buds.

The protein localises to the nucleus. Probable transcriptional regulator. The sequence is that of Methyl-CpG-binding domain-containing protein 1 (MBD1) from Arabidopsis thaliana (Mouse-ear cress).